The chain runs to 1065 residues: Alpha-L-arabinofuranosidase (1065 aa).

An N-terminal signal peptide occupies residues 1–26; that stretch reads MKHWKKMAASLIAISTMVAVVPTTYA. In terms of domain architecture, BIG2 spans 277–346; sequence VVNNKLTLIE…TTELGGVKAE (70 aa). The segment at 997 to 1031 is disordered; the sequence is KAPTNPGEGDGDKGDGNKPTTPTTGDKTNVNKPGS. The segment covering 1014–1031 has biased composition (polar residues); the sequence is KPTTPTTGDKTNVNKPGS. The chain crosses the membrane as a helical span at residues 1040–1060; sequence VLGLGGAVVALAIAGISLTLW.

The protein belongs to the glycosyl hydrolase 43 family.

It is found in the cell membrane. It catalyses the reaction Hydrolysis of terminal non-reducing alpha-L-arabinofuranoside residues in alpha-L-arabinosides.. Functionally, involved in the type II arabinogalactan (AG) side chains degradation. Releases arabinofuranose (Araf) from alpha-1,3-Araf-substituted beta-1,6-galactooligosaccharides. Can use radish root AGP, larch AG and arabinan. Shows weaker activity with gum arabic and arabinoxylan. The sequence is that of Alpha-L-arabinofuranosidase from Bifidobacterium longum subsp. longum (strain ATCC 15707 / DSM 20219 / JCM 1217 / NCTC 11818 / E194b).